The primary structure comprises 491 residues: MNYKAHYIGGRWIEGQGESITKFSPIDQQVLWQANSADASQVRAACHAAREAFYAWSHLPASERIKVIQTFAALLNEEKETLARVISQETSKPLWETRTEIQSMIGKAAISIEAWEQRTGESETIMPDGRALLRHRPHGVMAVFGPYNFPGHLPNGHIIPALIAGNTLVFKPSELTPMTAEETVKLWEKAGLPAGVLNLVQGARSTGTALLEDKQIDGVLFTGSANTGFHFHRMLGGQPEKMLALEMGGNNALIVDAYDDIDAAVYTIVQSAFISAGQRCTCARRLLVKNGAHGDAVIKRLVEVTERIVPSHWDAQPQPFIGGVISLQAVQNLLEAQDRLQKLGGISLVSLEQCQPQSTLLTPGIIDVSQVADVPDEEYFGPLLMLMRYDTFDEALAIANNTRFGLATGLISPDAALFQRLSEDARAGIVNWNKPLTGASSKAPFGGIGASGNYRPSAYYAADYCAWPMASLVADELTLPETLAPGLHFPD.

An NAD(+)-binding site is contributed by 223 to 228 (GSANTG). Catalysis depends on residues Glu246 and Cys280.

This sequence belongs to the aldehyde dehydrogenase family. AstD subfamily.

It carries out the reaction N-succinyl-L-glutamate 5-semialdehyde + NAD(+) + H2O = N-succinyl-L-glutamate + NADH + 2 H(+). Its pathway is amino-acid degradation; L-arginine degradation via AST pathway; L-glutamate and succinate from L-arginine: step 4/5. Functionally, catalyzes the NAD-dependent reduction of succinylglutamate semialdehyde into succinylglutamate. The chain is N-succinylglutamate 5-semialdehyde dehydrogenase from Photorhabdus laumondii subsp. laumondii (strain DSM 15139 / CIP 105565 / TT01) (Photorhabdus luminescens subsp. laumondii).